Reading from the N-terminus, the 917-residue chain is Transcriptional regulatory protein SEF1 (917 aa).

Residues 1 to 88 (MKFEKGKVRI…SKPTGHRPVT (88 aa)) form a disordered region. Residues 13-27 (KPSPTPTNPQTPLPL) are compositionally biased toward pro residues. The span at 56-70 (SNSTASTPNSATPTS) shows a compositional bias: low complexity. Polar residues predominate over residues 71-81 (VGTPPQKTSKP). A DNA-binding region (zn(2)-C6 fungal-type) is located at residues 90 to 120 (CTFCRQHKIKCNASDNYPNPCERCKKMGLKC). Positions 129–164 (RKGSQIQSLKSDVDELKAKIEMLTKNESLLTQALNQ) form a coiled coil. Disordered stretches follow at residues 168-212 (NHAS…ASPI) and 778-849 (QQYP…PFIL). The segment covering 171 to 184 (SQQQQSSGSQSQQQ) has biased composition (low complexity). Polar residues predominate over residues 191–212 (RALSYTSANSSPQVAFSNASPI). Positions 778-827 (QQYPMQQDQQQQEPSQQQQQKHSQQSQQYQQQQQSNQQQPHLQHQRQFQQ) are enriched in low complexity.

As to quaternary structure, interacts with SSN3 and SFU1. Phosphorylated by SSN3 under iron-depleted conditions which leads to nuclear localization.

It is found in the cytoplasm. The protein resides in the nucleus. Transcription factor which plays an essential role in virulence by activating the transcription of iron uptake genes such as FRE7 in iron-poor environments such as the host bloodstream and internal organs. Promotes commensalism in a mouse model of gastrointestinal infection. The protein is Transcriptional regulatory protein SEF1 (SEF1) of Candida albicans (strain SC5314 / ATCC MYA-2876) (Yeast).